A 380-amino-acid polypeptide reads, in one-letter code: DNA-directed RNA polymerase subunit Rpo1C (380 aa).

This sequence belongs to the RNA polymerase beta' chain family. In terms of assembly, part of the RNA polymerase complex.

The protein localises to the cytoplasm. The enzyme catalyses RNA(n) + a ribonucleoside 5'-triphosphate = RNA(n+1) + diphosphate. Functionally, DNA-dependent RNA polymerase (RNAP) catalyzes the transcription of DNA into RNA using the four ribonucleoside triphosphates as substrates. Forms part of the jaw domain. In Archaeoglobus fulgidus (strain ATCC 49558 / DSM 4304 / JCM 9628 / NBRC 100126 / VC-16), this protein is DNA-directed RNA polymerase subunit Rpo1C.